The sequence spans 197 residues: Nucleoid occlusion factor SlmA (197 aa).

The region spanning 7 to 67 (INRREHILQC…GLIDFIEESL (61 aa)) is the HTH tetR-type domain. A DNA-binding region (H-T-H motif) is located at residues 30–49 (TTAKLAAEVGVSEAALYRHF).

Belongs to the nucleoid occlusion factor SlmA family. Homodimer. Interacts with FtsZ.

It localises to the cytoplasm. The protein resides in the nucleoid. Required for nucleoid occlusion (NO) phenomenon, which prevents Z-ring formation and cell division over the nucleoid. Acts as a DNA-associated cell division inhibitor that binds simultaneously chromosomal DNA and FtsZ, and disrupts the assembly of FtsZ polymers. SlmA-DNA-binding sequences (SBS) are dispersed on non-Ter regions of the chromosome, preventing FtsZ polymerization at these regions. In Shewanella woodyi (strain ATCC 51908 / MS32), this protein is Nucleoid occlusion factor SlmA.